The following is a 456-amino-acid chain: Asparagine--tRNA ligase (456 aa).

Belongs to the class-II aminoacyl-tRNA synthetase family. In terms of assembly, homodimer.

It is found in the cytoplasm. It catalyses the reaction tRNA(Asn) + L-asparagine + ATP = L-asparaginyl-tRNA(Asn) + AMP + diphosphate + H(+). The chain is Asparagine--tRNA ligase from Mycoplasma genitalium (strain ATCC 33530 / DSM 19775 / NCTC 10195 / G37) (Mycoplasmoides genitalium).